We begin with the raw amino-acid sequence, 135 residues long: Large ribosomal subunit protein uL16c (135 aa).

This sequence belongs to the universal ribosomal protein uL16 family. In terms of assembly, part of the 50S ribosomal subunit.

It is found in the plastid. It localises to the chloroplast. This Lactuca sativa (Garden lettuce) protein is Large ribosomal subunit protein uL16c.